A 179-amino-acid chain; its full sequence is ADP-ribose 1''-phosphate phosphatase (179 aa).

The 179-residue stretch at 1 to 179 (MIKYIKGDLF…NLHINVYVVD (179 aa)) folds into the Macro domain. Substrate contacts are provided by residues 7 to 9 (GDL), 26 to 28 (ACN), 33 to 38 (WGGGIA), and 149 to 155 (INAGLFA).

Belongs to the POA1 family.

The enzyme catalyses ADP-alpha-D-ribose 1''-phosphate + H2O = ADP-D-ribose + phosphate. Highly specific phosphatase involved in the metabolism of ADP-ribose 1''-phosphate (Appr1p) which is produced as a consequence of tRNA splicing. The protein is ADP-ribose 1''-phosphate phosphatase (POA1) of Debaryomyces hansenii (strain ATCC 36239 / CBS 767 / BCRC 21394 / JCM 1990 / NBRC 0083 / IGC 2968) (Yeast).